The primary structure comprises 201 residues: Large ribosomal subunit protein bL25 (201 aa).

Residues 179–201 are disordered; the sequence is VSITAPRVEAEKTEEEEPESTEE. Residues 190 to 201 show a composition bias toward acidic residues; that stretch reads KTEEEEPESTEE.

Belongs to the bacterial ribosomal protein bL25 family. CTC subfamily. Part of the 50S ribosomal subunit; part of the 5S rRNA/L5/L18/L25 subcomplex. Contacts the 5S rRNA. Binds to the 5S rRNA independently of L5 and L18.

Its function is as follows. This is one of the proteins that binds to the 5S RNA in the ribosome where it forms part of the central protuberance. This is Large ribosomal subunit protein bL25 from Prosthecochloris aestuarii (strain DSM 271 / SK 413).